A 381-amino-acid polypeptide reads, in one-letter code: L-lactate dehydrogenase (381 aa).

The 380-residue stretch at 1 to 380 (MIISSASDYR…KPEALVDLSK (380 aa)) folds into the FMN hydroxy acid dehydrogenase domain. Tyr-24 lines the substrate pocket. 2 residues coordinate FMN: Ser-106 and Gln-127. Tyr-129 contacts substrate. Thr-155 contacts FMN. Arg-164 is a binding site for substrate. Lys-251 serves as a coordination point for FMN. His-275 serves as the catalytic Proton acceptor. A substrate-binding site is contributed by Arg-278. Residue 306–330 (DSGIRNGLDIVRMLALGADATMLGR) coordinates FMN.

The protein belongs to the FMN-dependent alpha-hydroxy acid dehydrogenase family. FMN is required as a cofactor.

Its subcellular location is the cell inner membrane. It catalyses the reaction (S)-lactate + A = pyruvate + AH2. Functionally, catalyzes the conversion of L-lactate to pyruvate. Is coupled to the respiratory chain. The chain is L-lactate dehydrogenase from Haemophilus influenzae (strain ATCC 51907 / DSM 11121 / KW20 / Rd).